A 914-amino-acid polypeptide reads, in one-letter code: Sensor protein TorS (914 aa).

Residues 1–8 (MNLTLTRR) are Cytoplasmic-facing. The chain crosses the membrane as a helical span at residues 9–29 (LWMGFALMALLTLTSTLVGWY). At 30-332 (NLRFISQVEK…EKASARGQYS (303 aa)) the chain is on the periplasmic side. The chain crosses the membrane as a helical span at residues 333 to 353 (LLLLGMVSLCALILILWRVVY). In terms of domain architecture, HAMP spans 354-407 (RSVTRPLAEQTQALQRLLDGDIDSPFPETAGVRELDTIGRLMDAFRSNVHALNR). Over 354–914 (RSVTRPLAEQ…WLHKKDLNAI (561 aa)) the chain is Cytoplasmic. Residues 450 to 664 (AMSHEIRTPL…CFCLRLPLRV (215 aa)) enclose the Histidine kinase domain. His453 carries the phosphohistidine; by autocatalysis modification. One can recognise a Response regulatory domain in the interval 683-798 (RLLLIEDNPL…VLGQLLAHYL (116 aa)). Position 733 is a 4-aspartylphosphate (Asp733). The region spanning 821–914 (GTEKIHEWLV…WLHKKDLNAI (94 aa)) is the HPt domain. His860 is subject to Phosphohistidine.

As to quaternary structure, may form homomultimers. Seems to interact with TorT and TorC apocytochrome. Activation requires a sequential transfer of a phosphate group from a His in the primary transmitter domain, to an Asp in the receiver domain and to a His in the secondary transmitter domain.

It localises to the cell inner membrane. The enzyme catalyses ATP + protein L-histidine = ADP + protein N-phospho-L-histidine.. Inhibited by TorC apocytochrome. Functionally, member of the two-component regulatory system TorS/TorR involved in the anaerobic utilization of trimethylamine-N-oxide (TMAO). Detects the presence of TMAO in the medium and, in response, activates TorR via a four-step phosphorelay. When TMAO is removed, TorS can dephosphorylate TorR, probably by a reverse phosphorelay involving His-860 and Asp-733. The sequence is that of Sensor protein TorS (torS) from Escherichia coli (strain K12).